The chain runs to 345 residues: S-adenosylmethionine:tRNA ribosyltransferase-isomerase (345 aa).

This sequence belongs to the QueA family. Monomer.

Its subcellular location is the cytoplasm. It carries out the reaction 7-aminomethyl-7-carbaguanosine(34) in tRNA + S-adenosyl-L-methionine = epoxyqueuosine(34) in tRNA + adenine + L-methionine + 2 H(+). It participates in tRNA modification; tRNA-queuosine biosynthesis. Transfers and isomerizes the ribose moiety from AdoMet to the 7-aminomethyl group of 7-deazaguanine (preQ1-tRNA) to give epoxyqueuosine (oQ-tRNA). In Helicobacter pylori (strain HPAG1), this protein is S-adenosylmethionine:tRNA ribosyltransferase-isomerase.